A 317-amino-acid polypeptide reads, in one-letter code: Ribosomal protein L11 methyltransferase (317 aa).

Residues Thr-158, Gly-179, Asp-201, and Asn-244 each contribute to the S-adenosyl-L-methionine site.

This sequence belongs to the methyltransferase superfamily. PrmA family.

Its subcellular location is the cytoplasm. The enzyme catalyses L-lysyl-[protein] + 3 S-adenosyl-L-methionine = N(6),N(6),N(6)-trimethyl-L-lysyl-[protein] + 3 S-adenosyl-L-homocysteine + 3 H(+). In terms of biological role, methylates ribosomal protein L11. The protein is Ribosomal protein L11 methyltransferase of Streptococcus pyogenes serotype M3 (strain ATCC BAA-595 / MGAS315).